Here is a 202-residue protein sequence, read N- to C-terminus: Imidazoleglycerol-phosphate dehydratase (202 aa).

This sequence belongs to the imidazoleglycerol-phosphate dehydratase family.

It localises to the cytoplasm. It carries out the reaction D-erythro-1-(imidazol-4-yl)glycerol 3-phosphate = 3-(imidazol-4-yl)-2-oxopropyl phosphate + H2O. It participates in amino-acid biosynthesis; L-histidine biosynthesis; L-histidine from 5-phospho-alpha-D-ribose 1-diphosphate: step 6/9. This chain is Imidazoleglycerol-phosphate dehydratase, found in Acinetobacter baumannii (strain AYE).